Here is a 343-residue protein sequence, read N- to C-terminus: Uroporphyrinogen decarboxylase (343 aa).

Substrate-binding positions include 23-27 (RQAGR), D73, Y150, S205, and H322.

This sequence belongs to the uroporphyrinogen decarboxylase family. As to quaternary structure, homodimer.

It is found in the cytoplasm. The enzyme catalyses uroporphyrinogen III + 4 H(+) = coproporphyrinogen III + 4 CO2. It functions in the pathway porphyrin-containing compound metabolism; protoporphyrin-IX biosynthesis; coproporphyrinogen-III from 5-aminolevulinate: step 4/4. Functionally, catalyzes the decarboxylation of four acetate groups of uroporphyrinogen-III to yield coproporphyrinogen-III. The protein is Uroporphyrinogen decarboxylase of Cereibacter sphaeroides (strain ATCC 17029 / ATH 2.4.9) (Rhodobacter sphaeroides).